The sequence spans 360 residues: DNA replication and repair protein RecF (360 aa).

33 to 40 contacts ATP; sequence GENGSGKT.

This sequence belongs to the RecF family.

It is found in the cytoplasm. In terms of biological role, the RecF protein is involved in DNA metabolism; it is required for DNA replication and normal SOS inducibility. RecF binds preferentially to single-stranded, linear DNA. It also seems to bind ATP. This is DNA replication and repair protein RecF from Rickettsia conorii (strain ATCC VR-613 / Malish 7).